A 230-amino-acid chain; its full sequence is Zein-alpha 19A2 (230 aa).

The signal sequence occupies residues 1–18; sequence KIFCFLMLLGLSASAATA.

It belongs to the zein family.

Functionally, zeins are major seed storage proteins. This chain is Zein-alpha 19A2, found in Zea mays (Maize).